The sequence spans 361 residues: MAQNSLRLVEDKSVDKSKALEAALSQIERSFGKGSIMKLGSKDSVIEIETVSTGSLGLDIALGIGGLPKGRIIEIYGPESSGKTTLALQTIAEAQKKGGICGFVDAEHALDPVYARKLGVDLENLLISQPDTGEQALEITDTLVRSGAIDVLVVDSVAALVPRAEIEGEMGDSLPGMQARLMSQALRKLTASISKSNCMVIFINQIRMKIGVMFGSPETTTGGNALKFYASVRLDIRRIGSVKEREEVVGNQTRVKVVKNKMAPPFKQVEFDIMYGEGVSKTGELIDLGVKAGIVEKSGAWFSYNSQRLGQGRENAKLFLRDNPDLLREIEMALRQNAGLIADKFLENGGPESEGDEAADM.

Residue 77–84 participates in ATP binding; the sequence is GPESSGKT.

The protein belongs to the RecA family.

The protein resides in the cytoplasm. Its function is as follows. Can catalyze the hydrolysis of ATP in the presence of single-stranded DNA, the ATP-dependent uptake of single-stranded DNA by duplex DNA, and the ATP-dependent hybridization of homologous single-stranded DNAs. It interacts with LexA causing its activation and leading to its autocatalytic cleavage. This Sinorhizobium fredii (strain NBRC 101917 / NGR234) protein is Protein RecA.